Consider the following 289-residue polypeptide: Phosphatidylglycerol--prolipoprotein diacylglyceryl transferase (289 aa).

Transmembrane regions (helical) follow at residues 23–43, 61–81, 99–119, 125–145, 199–219, 226–246, and 259–279; these read ALHWYGLMYLVGFVFAMWLAV, LLYMGFLGVFVGGRLGYVLFY, GGMSFHGGLMGVICVMLWFAH, FFQVADFIAPLIPFGLGAGRL, SQLYQMMLEGVALFIILNLFI, GSVSGLFLIGYGTFRIITEFF, and LFSMGQILSLPMVIAGILMMV. Arginine 144 contacts a 1,2-diacyl-sn-glycero-3-phospho-(1'-sn-glycerol).

The protein belongs to the Lgt family.

The protein resides in the cell inner membrane. The enzyme catalyses L-cysteinyl-[prolipoprotein] + a 1,2-diacyl-sn-glycero-3-phospho-(1'-sn-glycerol) = an S-1,2-diacyl-sn-glyceryl-L-cysteinyl-[prolipoprotein] + sn-glycerol 1-phosphate + H(+). It participates in protein modification; lipoprotein biosynthesis (diacylglyceryl transfer). Its function is as follows. Catalyzes the transfer of the diacylglyceryl group from phosphatidylglycerol to the sulfhydryl group of the N-terminal cysteine of a prolipoprotein, the first step in the formation of mature lipoproteins. This is Phosphatidylglycerol--prolipoprotein diacylglyceryl transferase from Pectobacterium carotovorum subsp. carotovorum (strain PC1).